Reading from the N-terminus, the 134-residue chain is D-ribose pyranase (134 aa).

The active-site Proton donor is the His-20. Substrate is bound by residues Asp-28, His-99, and 123 to 125; that span reads FSN.

The protein belongs to the RbsD / FucU family. RbsD subfamily. As to quaternary structure, homodecamer.

The protein localises to the cytoplasm. The catalysed reaction is beta-D-ribopyranose = beta-D-ribofuranose. The protein operates within carbohydrate metabolism; D-ribose degradation; D-ribose 5-phosphate from beta-D-ribopyranose: step 1/2. Functionally, catalyzes the interconversion of beta-pyran and beta-furan forms of D-ribose. In Staphylococcus carnosus (strain TM300), this protein is D-ribose pyranase.